A 337-amino-acid polypeptide reads, in one-letter code: Interferon gamma receptor 2 (337 aa).

Positions 1–21 (MRPTLLWSLLLLLGVFAAAAA) are cleaved as a signal peptide. At 28–247 (SQLPAPQHPK…MADASTELQQ (220 aa)) the chain is on the extracellular side. The 99-residue stretch at 31–129 (PAPQHPKIRL…GALHSAWVTM (99 aa)) folds into the Fibronectin type-III 1 domain. N56 and N85 each carry an N-linked (GlcNAc...) asparagine glycan. A disulfide bridge links C86 with C94. N-linked (GlcNAc...) asparagine glycosylation is found at N110, N137, N219, and N231. The 99-residue stretch at 142–240 (PPENIEVTPG…NISCYETMAD (99 aa)) folds into the Fibronectin type-III 2 domain. A disulfide bond links C209 and C234. Residues 248–268 (VILISVGTFSLLSVLAGACFF) traverse the membrane as a helical segment. Topologically, residues 269–337 (LVLKYRGLIK…KEQEDVLQTL (69 aa)) are cytoplasmic. The Dileucine internalization motif signature appears at 276-277 (LI).

This sequence belongs to the type II cytokine receptor family. Heterodimer with IFNGR1, to form the IFNG receptor complex. Interacts (via intracellular domain) with JAK2. Expressed in T-cells (at protein level).

The protein resides in the cell membrane. Its subcellular location is the cytoplasmic vesicle membrane. It is found in the golgi apparatus membrane. The protein localises to the endoplasmic reticulum membrane. It localises to the cytoplasm. Associates with IFNGR1 to form a receptor for the cytokine interferon gamma (IFNG). Ligand binding stimulates activation of the JAK/STAT signaling pathway. Required for signal transduction in contrast to other receptor subunit responsible for ligand binding. In Homo sapiens (Human), this protein is Interferon gamma receptor 2.